Here is a 374-residue protein sequence, read N- to C-terminus: o-succinylbenzoate synthase (374 aa).

Lys-164 functions as the Proton donor in the catalytic mechanism. Mg(2+)-binding residues include Asp-189, Glu-214, and Asp-239. Catalysis depends on Lys-263, which acts as the Proton acceptor.

It belongs to the mandelate racemase/muconate lactonizing enzyme family. MenC type 2 subfamily. In terms of assembly, homodimer. A divalent metal cation is required as a cofactor.

The catalysed reaction is (1R,6R)-6-hydroxy-2-succinyl-cyclohexa-2,4-diene-1-carboxylate = 2-succinylbenzoate + H2O. It participates in quinol/quinone metabolism; 1,4-dihydroxy-2-naphthoate biosynthesis; 1,4-dihydroxy-2-naphthoate from chorismate: step 4/7. It functions in the pathway quinol/quinone metabolism; menaquinone biosynthesis. Functionally, converts 2-succinyl-6-hydroxy-2,4-cyclohexadiene-1-carboxylate (SHCHC) to 2-succinylbenzoate (OSB). Also acts as a N-succinylamino acid racemase (NSAR) that catalyzes the racemization of N-succinyl-L-phenylglycine. L.innocua has the menaquinone synthesis pathway, indicating that the species requires OSBS activity. However, the NSAR/OSBS is not encoded in the menaquinone operon, raising the possibility that both NSAR and OSBS are biological functions. This is o-succinylbenzoate synthase from Listeria innocua serovar 6a (strain ATCC BAA-680 / CLIP 11262).